The sequence spans 2325 residues: Centriolin (2325 aa).

Residues 1 to 33 are disordered; the sequence is MKKGSQQKIFSKAKIPSSSHSPIPSSMSNMRSR. Residues 16–33 are compositionally biased toward low complexity; the sequence is PSSSHSPIPSSMSNMRSR. LRR repeat units lie at residues 126–147, 148–169, 170–191, and 194–215; these read KLEVLNLSYNLIGKIEKLDKLL, KLRELNLSYNKISKIEGIENMC, NLQKLNLAGNEIEHIPVWLGKK, and SLRVLNLKGNKISSLQDISKLK. The 39-residue stretch at 228–266 folds into the LRRCT domain; that stretch reads NPVVTLPHYLQFTIFHLRSLESLEGQPVTTQDRQEAFER. Coiled coils occupy residues 267–343 and 435–799; these read FSLE…IELT and LDTQ…LNHV. S831 is modified (phosphoserine). Positions 851–1101 form a coiled coil; the sequence is LARSKWERDE…ARLQNVLDLT (251 aa). The interval 1150–1241 is disordered; that stretch reads PSSKVSSHSS…DQEEPPFVPP (92 aa). Positions 1224 to 1235 are enriched in acidic residues; the sequence is SQEESELDDQEE. The stretch at 1317–2255 forms a coiled coil; the sequence is EHHNLENEVS…DRLKAQLRHC (939 aa). Position 1475 is a phosphoserine (S1475). Residues 1948-2118 are required for centrosome localization; that stretch reads MMFQRLQKER…ELVAQDNHER (171 aa). The segment at 1985–2325 is sufficient for interaction with HOOK2; that stretch reads QKSKLDQVLS…QNQEKNASAR (341 aa). The tract at residues 2288 to 2325 is disordered; the sequence is VTSTSADSASSPSLSQLESSLTEDSQLGQNQEKNASAR. Residues 2290–2314 show a composition bias toward low complexity; it reads STSADSASSPSLSQLESSLTEDSQL. The span at 2315 to 2325 shows a compositional bias: polar residues; sequence GQNQEKNASAR.

In terms of assembly, interacts with HOOK2. Interacts with EXOC6 and SNAPIN. Associates with the exocyst complex. As to expression, widely expressed with highest levels in testis and trachea.

It is found in the cytoplasm. It localises to the cytoskeleton. Its subcellular location is the microtubule organizing center. The protein localises to the centrosome. The protein resides in the midbody. It is found in the midbody ring. Functionally, involved in cell cycle progression and cytokinesis. During the late steps of cytokinesis, anchors exocyst and SNARE complexes at the midbody, thereby allowing secretory vesicle-mediated abscission. The polypeptide is Centriolin (CNTRL) (Homo sapiens (Human)).